A 269-amino-acid chain; its full sequence is Thyroxine 5-deiodinase (269 aa).

Topologically, residues 1 to 14 (MLPAPHTCCRLLQQ) are cytoplasmic. Residues 15–35 (LLACCLLLPRFLLTVLLLWLL) traverse the membrane as a helical; Signal-anchor for type II membrane protein segment. The Extracellular portion of the chain corresponds to 36–269 (DFPCVRRRVI…TGNGALVIQV (234 aa)). Sec133 is an active-site residue. Sec133 is a non-standard amino acid (selenocysteine).

Belongs to the iodothyronine deiodinase family. As to quaternary structure, monomer. Homodimer. May undergo minor heretodimerization with DIO1 and DIO2.

Its subcellular location is the cell membrane. The protein localises to the endosome membrane. It carries out the reaction 3,3',5'-triiodo-L-thyronine + iodide + A + H(+) = L-thyroxine + AH2. It catalyses the reaction 3,3'-diiodo-L-thyronine + iodide + A + H(+) = 3,3',5-triiodo-L-thyronine + AH2. The catalysed reaction is 3-iodo-L-thyronine + iodide + A + H(+) = 3,5-diiodo-L-thyronine + AH2. The enzyme catalyses L-thyronine + iodide + A + H(+) = 3-iodo-L-thyronine + AH2. It carries out the reaction 3',5'-diiodo-L-thyronine + iodide + A + H(+) = 3,3',5'-triiodo-L-thyronine + AH2. It catalyses the reaction 3'-iodo-L-thyronine + iodide + A + H(+) = 3,3'-diiodo-L-thyronine + AH2. The catalysed reaction is 3,3',5'-triiodothyronamine + iodide + A + H(+) = 3,3',5,5'-tetraiodothyronamine + AH2. The enzyme catalyses 3',5'-diiodothyronamine + iodide + A + H(+) = 3,3',5'-triiodothyronamine + AH2. It carries out the reaction 3,3'-diiodothyronamine + iodide + A + H(+) = 3,3',5-triiodothyronamine + AH2. It catalyses the reaction 3-iodothyronamine + iodide + A + H(+) = 3,5-diiodothyronamine + AH2. The catalysed reaction is 3'-iodothyronamine + iodide + A + H(+) = 3,3'-diiodothyronamine + AH2. The enzyme catalyses thyronamine + iodide + A + H(+) = 3-iodothyronamine + AH2. Its function is as follows. Plays a crucial role in the metabolism of thyroid hormones (TH) and has specific roles in TH activation and inactivation by deiodination. Catalyzes the deiodination of L-thyroxine (T4) to 3,3',5'-triiodothyronine (rT3), 3,5-diiodothyronine (3,5-T2) to 3-monoiodothyronine (3-T1), rT3 to 3',5'-diiodothyronine (3',5'-T2) and 3,3'-diiodothyronine (3,3'-T2) to 3'-monoiodothyronine (3'-T1) via inner-ring deiodination (IRD). Catalyzes the deiodination of 3,5,3'-triiodothyronine (T3) to 3,3'-diiodothyronine (3,3'-T2) via IRD. Catalyzes the deiodination of 3-T1 to L-thyronine (T0) via outer-ring deiodination (ORD). Catalyzes the tyrosyl ring deiodinations of 3,3',5,5'-tetraiodothyronamine, 3,3',5'-triiodothyronamine, 3,5,3'-triiodothyronamine, 3,5-diiodothyronamine, 3,3'-diiodothyronamine and 3-iodothyronamine. The sequence is that of Thyroxine 5-deiodinase (dio3) from Aquarana catesbeiana (American bullfrog).